The following is a 226-amino-acid chain: Ribonuclease 3 (226 aa).

The region spanning 7–129 is the RNase III domain; that stretch reads LPRLCRTLGY…IIGAVYLDSD (123 aa). Glutamate 42 is a binding site for Mg(2+). Aspartate 46 is an active-site residue. The Mg(2+) site is built by aspartate 115 and glutamate 118. Glutamate 118 is a catalytic residue. The region spanning 156 to 226 is the DRBM domain; the sequence is DAKTLLQEHL…AAQVLELLKK (71 aa).

Belongs to the ribonuclease III family. As to quaternary structure, homodimer. Mg(2+) is required as a cofactor.

The protein resides in the cytoplasm. The catalysed reaction is Endonucleolytic cleavage to 5'-phosphomonoester.. Digests double-stranded RNA. Involved in the processing of primary rRNA transcript to yield the immediate precursors to the large and small rRNAs (23S and 16S). Processes some mRNAs, and tRNAs when they are encoded in the rRNA operon. Processes pre-crRNA and tracrRNA of type II CRISPR loci if present in the organism. The chain is Ribonuclease 3 from Shewanella baltica (strain OS185).